The following is a 290-amino-acid chain: Glucuronoxylan 4-O-methyltransferase 2 (290 aa).

The helical transmembrane segment at 8 to 28 threads the bilayer; that stretch reads FISSKLIFICCSILVLFILFL.

Belongs to the methyltransferase superfamily. In terms of tissue distribution, expressed in roots, rosette leaves and stems.

Its subcellular location is the golgi apparatus membrane. The catalysed reaction is glucuronoxylan D-glucuronate + n S-adenosyl-L-methionine = glucuronoxylan 4-O-methyl-D-glucuronate + n S-adenosyl-L-homocysteine + n H(+). Functionally, methyltransferase catalyzing 4-O-methylation of glucuronic acid side chains on xylan. The sequence is that of Glucuronoxylan 4-O-methyltransferase 2 (GXM2) from Arabidopsis thaliana (Mouse-ear cress).